A 2513-amino-acid chain; its full sequence is Polyprotein P1234 (2513 aa).

The region spanning 28–259 (EPKQVTPNDH…ESRKLLQSWH (232 aa)) is the Alphavirus-like MT domain. Residues 244–263 (GSTLYPESRKLLQSWHLPSV) are nsP1 membrane-binding. Residues C417 and C419 are each lipidated (S-palmitoyl cysteine; by host). The (+)RNA virus helicase ATP-binding domain maps to 690–842 (DLTSPPYHEF…HNICTQVYHK (153 aa)). 721–728 (GVPGSGKS) serves as a coordination point for a ribonucleoside 5'-triphosphate. A (+)RNA virus helicase C-terminal domain is found at 843 to 991 (SISRRCTLPV…IKEWEAEHAS (149 aa)). The region spanning 1004–1327 (DTFQNKANVC…NQLNAVYAGL (324 aa)) is the Peptidase C9 domain. Residues 1005 to 1024 (TFQNKANVCWAKCLVPILDT) form a nucleolus localization signal region. The For cysteine protease nsP2 activity role is filled by C1013. A Nuclear export signal motif is present at residues 1058–1067 (TRIYGVDLDS). H1083 functions as the For cysteine protease nsP2 activity in the catalytic mechanism. A Nuclear localization signal motif is present at residues 1182–1186 (PTKRV). ADP-D-ribose-binding residues include D1343, N1357, G1365, G1445, V1446, and Y1447. Zn(2+)-binding residues include C1595, C1597, C1620, and C1638. 2 consecutive short sequence motifs (FGDF; binding to host G3BP1) follow at residues 1851–1854 (FGDF) and 1869–1872 (FGDF). A RdRp catalytic domain is found at 2267-2382 (DAVLETDIAS…HGVVSDALMA (116 aa)).

As to quaternary structure, interacts with non-structural protein 3. Interacts with RNA-directed RNA polymerase nsP4. Interacts with protease nsP2. interacts with itself. In terms of assembly, interacts with mRNA-capping enzyme nsP1. Interacts with host DDX1. Interacts with host DDX3. Interacts (via C-terminus) with host G3BP1; this interaction inhibits the formation of host stress granules on viral mRNAs and the nsp3-G3BP1 complexes bind viral RNAs and probably orchestrate the assembly of viral replication complexes. Interacts (via C-terminus) with host G3BP2; this interaction inhibits the formation of host stress granules on viral mRNAs and the nsp3-G3BP2 complexes bind viral RNAs and probably orchestrate the assembly of viral replication complexes. Interacts with mRNA-capping enzyme nsP1. Interacts with protease nsP2. interacts with itself. As to quaternary structure, interacts with RNA-directed RNA polymerase nsP4. Interacts with mRNA-capping enzyme nsP1. Interacts with KPNA1/karyopherin-alpha1; this interaction probably allows the active transport of protease nsP2 into the host nucleus. Mg(2+) is required as a cofactor. It depends on Mn(2+) as a cofactor. Post-translationally, specific enzymatic cleavages in vivo yield mature proteins. The processing of the polyprotein is temporally regulated. In early stages (1.7 hpi), P1234 is first cleaved in trans through its nsP2 protease activity, releasing P123 and nsP4, which associate to form the early replication complex. At the same time, P1234 is also cut at the nsP1/nsP2 site early in infection but with lower efficiency. After replication of the viral minus-strand RNAs (4 hpi), the polyproteins are cut at the nsP1/nsP2 and nsP2/nsP3 sites very efficiently, preventing accumulation of P123 and P1234 and allowing the formation of the late replication complex. NsP3/nsP4 site is not cleaved anymore and P34 is produced rather than nsP4. In terms of processing, specific enzymatic cleavages in vivo yield mature proteins. The processing of the polyprotein is temporally regulated. In early stages (1.7 hpi), P123 is cleaved at the nsP1/nsP2 site with low efficiency. After replication of the viral minus-strand RNAs (4 hpi), the polyproteins are cut at the nsP1/nsP2 and nsP2/nsP3 sites very efficiently, preventing accumulation of P123 and allowing the formation of the late replication complex. Palmitoylated by host palmitoyltransferases ZDHHC2 and ZDHHC19. Post-translationally, phosphorylated by host on serines and threonines. In terms of processing, ubiquitinated; targets the protein for rapid degradation via the ubiquitin system. Nsp4 is present in extremely low quantities due to low frequency of translation through the amber stop-codon and the degradation by the ubiquitin pathway.

Its subcellular location is the host cytoplasmic vesicle membrane. It localises to the host cell membrane. It is found in the host cell projection. The protein resides in the host filopodium. The protein localises to the host nucleus. Its subcellular location is the host cytoplasm. The enzyme catalyses GTP + S-adenosyl-L-methionine = N(7)-methyl-GTP + S-adenosyl-L-homocysteine. It catalyses the reaction N(7)-methyl-GTP + L-histidyl-[protein] = N(tele)-(N(7)-methylguanosine 5'-phospho)-L-histidyl-[protein] + diphosphate. The catalysed reaction is N(tele)-(N(7)-methylguanosine 5'-phospho)-L-histidyl-[protein] + a 5'-end diphospho-(purine-ribonucleoside) in mRNA + H(+) = a 5'-end (N(7)-methyl 5'-triphosphoguanosine)-(purine-ribonucleoside) in mRNA + L-histidyl-[protein]. It carries out the reaction a 5'-end triphospho-ribonucleoside in mRNA + H2O = a 5'-end diphospho-ribonucleoside in mRNA + phosphate + H(+). The enzyme catalyses a ribonucleoside 5'-triphosphate + H2O = a ribonucleoside 5'-diphosphate + phosphate + H(+). It catalyses the reaction ATP + H2O = ADP + phosphate + H(+). The catalysed reaction is RNA(n) + a ribonucleoside 5'-triphosphate = RNA(n+1) + diphosphate. It carries out the reaction 4-O-(ADP-D-ribosyl)-L-aspartyl-[protein] + H2O = L-aspartyl-[protein] + ADP-D-ribose + H(+). The enzyme catalyses 5-O-(ADP-D-ribosyl)-L-glutamyl-[protein] + H2O = L-glutamyl-[protein] + ADP-D-ribose + H(+). It catalyses the reaction RNA(n) + ATP = RNA(n)-3'-adenine ribonucleotide + diphosphate. The catalysed reaction is ADP-alpha-D-ribose 1''-phosphate + H2O = ADP-D-ribose + phosphate. Its function is as follows. Inactive precursor of the viral replicase, which is activated by cleavages carried out by the viral protease nsP2. In terms of biological role, the early replication complex formed by the polyprotein P123 and nsP4 synthesizes minus-strand RNAs. As soon P123 is cleaved into mature proteins, the plus-strand RNAs synthesis begins. Functionally, cytoplasmic capping enzyme that catalyzes two virus-specific reactions: methyltransferase and nsP1 guanylyltransferase. mRNA-capping is necessary since all viral RNAs are synthesized in the cytoplasm, and host capping enzymes are restricted to the nucleus. The enzymatic reaction involves a covalent link between 7-methyl-GMP and nsP1, whereas eukaryotic capping enzymes form a covalent complex only with GMP. nsP1 capping consists in the following reactions: GTP is first methylated into 7-methyl-GMP and then is covalently linked to nsP1 to form the m7GMp-nsP1 complex from which 7-methyl-GMP complex is transferred to the mRNA to create the cap structure. NsP1 is also needed for the initiation of the minus-strand RNAs synthesis. Probably serves as a membrane anchor for the replication complex composed of nsP1-nsP4. Palmitoylated nsP1 is remodeling host cell cytoskeleton, and induces filopodium-like structure formation at the surface of the host cell. Multifunctional protein whose N-terminus is part of the RNA polymerase complex and displays NTPase, RNA triphosphatase and helicase activities. NTPase and RNA triphosphatase are involved in viral RNA capping and helicase keeps a check on the dsRNA replication intermediates. The C-terminus harbors a protease that specifically cleaves the polyproteins and releases the mature proteins. Required for the shutoff of minus-strand RNAs synthesis. Specifically inhibits the host IFN response by promoting the nuclear export of host STAT1. Also inhibits host transcription by inducing the rapid proteasome-dependent degradation of POLR2A, a catalytic subunit of the RNAPII complex. The resulting inhibition of cellular protein synthesis serves to ensure maximal viral gene expression and to evade host immune response. Its function is as follows. Seems to be essential for minus-strand RNAs and subgenomic 26S mRNAs synthesis. Displays mono-ADP-ribosylhydrolase activity. ADP-ribosylation is a post-translational modification that controls various processes of the host cell and the virus probably needs to revert it for optimal viral replication. Binds proteins of G3BP family and sequesters them into the viral RNA replication complexes thereby inhibiting the formation of host stress granules on viral mRNAs. The nsp3-G3BP complexes bind viral RNAs and probably orchestrate the assembly of viral replication complexes, thanks to the ability of G3BP family members to self-assemble and bind DNA. In terms of biological role, RNA dependent RNA polymerase. Replicates genomic and antigenomic RNA by recognizing replications specific signals. The early replication complex formed by the polyprotein P123 and nsP4 synthesizes minus-strand RNAs. The late replication complex composed of fully processed nsP1-nsP4 is responsible for the production of genomic and subgenomic plus-strand RNAs. This chain is Polyprotein P1234, found in Anopheles (Human).